The chain runs to 658 residues: ATP-dependent DNA helicase Rep (658 aa).

Positions 1-280 (MSLNFNQKNA…IKMEQNYRSY (280 aa)) constitute a UvrD-like helicase ATP-binding domain. Residues 22-29 (AGAGSGKT) and arginine 278 each bind ATP. The UvrD-like helicase C-terminal domain maps to 281 to 564 (GRILKAANKL…QLMTLHSSKG (284 aa)).

Belongs to the helicase family. UvrD subfamily. Homodimer.

The catalysed reaction is Couples ATP hydrolysis with the unwinding of duplex DNA by translocating in the 3'-5' direction.. It catalyses the reaction ATP + H2O = ADP + phosphate + H(+). Rep helicase is a single-stranded DNA-dependent ATPase involved in DNA replication; it can initiate unwinding at a nick in the DNA. It binds to the single-stranded DNA and acts in a progressive fashion along the DNA in the 3' to 5' direction. The polypeptide is ATP-dependent DNA helicase Rep (Buchnera aphidicola subsp. Schizaphis graminum (strain Sg)).